The sequence spans 838 residues: AP-4 complex subunit beta (838 aa).

The tract at residues 582–673 (NSSKQTTSIN…NQNNNQNNNQ (92 aa)) is hinge. The disordered stretch occupies residues 648 to 683 (ITDGNQNNNQNNNQNNNQNNNQNNNQNNQNNNNQNN). Positions 652 to 683 (NQNNNQNNNQNNNQNNNQNNNQNNQNNNNQNN) are enriched in low complexity. Positions 674 to 838 (NNQNNNNQNN…LSIPIPKIFN (165 aa)) are ear.

The protein belongs to the adaptor complexes large subunit family. In terms of assembly, may be part of the adaptor protein complex 4 (AP-4), a heterotetramer composed of two large adaptins (epsilon-type subunitand beta-type subunit), a medium adaptin (mu-type subunit) and a small adaptin (sigma-type).

It is found in the golgi apparatus. Its subcellular location is the trans-Golgi network membrane. Its function is as follows. Probable component of an adaptor protein complex. Adaptor protein complexes are vesicle coat components involved both in vesicle formation and cargo selection. They control the vesicular transport of proteins in different trafficking pathways. The polypeptide is AP-4 complex subunit beta (ap4b1) (Dictyostelium discoideum (Social amoeba)).